A 210-amino-acid polypeptide reads, in one-letter code: Outer-membrane lipoprotein carrier protein (210 aa).

An N-terminal signal peptide occupies residues 1–23 (MKKRIQKTILTVLFSSLSSIAFA).

Belongs to the LolA family. Monomer.

The protein localises to the periplasm. Functionally, participates in the translocation of lipoproteins from the inner membrane to the outer membrane. Only forms a complex with a lipoprotein if the residue after the N-terminal Cys is not an aspartate (The Asp acts as a targeting signal to indicate that the lipoprotein should stay in the inner membrane). The sequence is that of Outer-membrane lipoprotein carrier protein from Haemophilus ducreyi (strain 35000HP / ATCC 700724).